The sequence spans 588 residues: Endogenous retrovirus group K member 7 Env polyprotein (588 aa).

The tract at residues 355–375 (FIFTLIAVIMGLIAVTATAAV) is fusion peptide. The helical transmembrane segment at 522–542 (IGSTTIINLILILVCLFCLLL) threads the bilayer.

It belongs to the beta type-B retroviral envelope protein family. HERV class-II K(HML-2) env subfamily. As to quaternary structure, the surface (SU) and transmembrane (TM) proteins form a heterodimer. SU and TM are attached by noncovalent interactions or by a labile interchain disulfide bond. In terms of processing, specific enzymatic cleavages in vivo yield the mature SU and TM proteins. As to expression, expressed in lung, placenta, testis and peripheral blood lymphocytes.

It is found in the virion. The protein localises to the cell membrane. Functionally, retroviral envelope proteins mediate receptor recognition and membrane fusion during early infection. Endogenous envelope proteins may have kept, lost or modified their original function during evolution. SU mediates receptor recognition. Its function is as follows. TM anchors the envelope heterodimer to the viral membrane through one transmembrane domain. The other hydrophobic domain, called fusion peptide, mediates fusion of the viral membrane with the target cell membrane. The sequence is that of Endogenous retrovirus group K member 7 Env polyprotein (ERVK-7) from Homo sapiens (Human).